A 404-amino-acid chain; its full sequence is NADH-quinone oxidoreductase subunit D (404 aa).

Belongs to the complex I 49 kDa subunit family. As to quaternary structure, NDH-1 is composed of 14 different subunits. Subunits NuoB, C, D, E, F, and G constitute the peripheral sector of the complex.

The protein localises to the cell inner membrane. The catalysed reaction is a quinone + NADH + 5 H(+)(in) = a quinol + NAD(+) + 4 H(+)(out). Its function is as follows. NDH-1 shuttles electrons from NADH, via FMN and iron-sulfur (Fe-S) centers, to quinones in the respiratory chain. The immediate electron acceptor for the enzyme in this species is believed to be ubiquinone. Couples the redox reaction to proton translocation (for every two electrons transferred, four hydrogen ions are translocated across the cytoplasmic membrane), and thus conserves the redox energy in a proton gradient. The chain is NADH-quinone oxidoreductase subunit D from Leptospira borgpetersenii serovar Hardjo-bovis (strain JB197).